A 531-amino-acid chain; its full sequence is Zinc finger CCCH-type with G patch domain-containing protein (531 aa).

The residue at position 1 (M1) is an N-acetylmethionine. Residues 91–133 (EAPAAARGSGSETVPKAEAGPESAAGGQEEEEGEDEEELSGTK) are disordered. Low complexity predominate over residues 107–117 (AEAGPESAAGG). Positions 118–129 (QEEEEGEDEEEL) are enriched in acidic residues. The C3H1-type zinc finger occupies 175–201 (KSLKPCPFFLEGKCRFKENCRFSHGQV). The tract at residues 267-289 (PPLRTEATESDSDSDGTGDSSYA) is disordered. One can recognise a G-patch domain in the interval 333–379 (TRGIGSRLLTKMGYEFGKGLGRHAEGRVEPIHAVVLPRGKSLDQCVE). Phosphoserine is present on S373. Disordered stretches follow at residues 385-409 (TRVG…GGRP), 426-446 (APGA…DMYH), and 509-531 (RAQE…MTEF). Low complexity predominate over residues 426-438 (APGALEAGAAPAG). The span at 518–531 (EQRKADTHKKMTEF) shows a compositional bias: basic and acidic residues.

As to quaternary structure, interacts with CHD4/Mi-2; the interaction is direct. Post-translationally, ubiquitinated in case of infection by HIV-1, leading to its degradation. Ubiquitination is mediated by the CUL4A-RBX1-DDB1-DCAF1/VPRBP complex that is hijacked by HIV-1 via interaction between HIV-1 Vpr and DCAF1/VPRBP. In terms of tissue distribution, widely expressed.

The protein localises to the nucleus. Its function is as follows. Transcription repressor that specifically binds the 5'-GGAG[GA]A[GA]A-3' consensus sequence. Represses transcription by recruiting the chromatin multiprotein complex NuRD to target promoters. Negatively regulates expression of EGFR, a gene involved in cell proliferation, survival and migration. Its ability to repress genes of the EGFR pathway suggest it may act as a tumor suppressor. Able to suppress breast carcinogenesis. In terms of biological role, antagonizes the transcription repression by isoform 1 by competing for the binding of the NuRD complex. Does not bind DNA. This Homo sapiens (Human) protein is Zinc finger CCCH-type with G patch domain-containing protein (ZGPAT).